The sequence spans 410 residues: Tyrosine--tRNA ligase (410 aa).

L-tyrosine is bound at residue Tyr36. The short motif at 41 to 50 (ATADSLTAGH) is the 'HIGH' region element. The L-tyrosine site is built by Tyr169 and Gln173. The short motif at 229 to 233 (KMGKT) is the 'KMSKS' region element. Lys232 serves as a coordination point for ATP. Residues 343–409 (IDLITMMIDA…GKKAYHLFRA (67 aa)) form the S4 RNA-binding domain.

The protein belongs to the class-I aminoacyl-tRNA synthetase family. TyrS type 1 subfamily. In terms of assembly, homodimer.

The protein resides in the cytoplasm. It carries out the reaction tRNA(Tyr) + L-tyrosine + ATP = L-tyrosyl-tRNA(Tyr) + AMP + diphosphate + H(+). Its function is as follows. Catalyzes the attachment of tyrosine to tRNA(Tyr) in a two-step reaction: tyrosine is first activated by ATP to form Tyr-AMP and then transferred to the acceptor end of tRNA(Tyr). This Lachnoclostridium phytofermentans (strain ATCC 700394 / DSM 18823 / ISDg) (Clostridium phytofermentans) protein is Tyrosine--tRNA ligase.